The following is a 505-amino-acid chain: DNA primase large subunit (505 aa).

The tract at residues Leu-253–Lys-270 is interdomain linker. Residues Lys-266 to Glu-503 are interacts with PRIM1. Residues Cys-287, Cys-367, Cys-384, and Cys-424 each coordinate [4Fe-4S] cluster. The segment at His-300–Asn-442 is RNA:DNA duplex binding. The interval Lys-463–Ala-486 is disordered. Polar residues predominate over residues Gln-467–Gln-478. Thr-470 bears the Phosphothreonine mark.

It belongs to the eukaryotic-type primase large subunit family. In terms of assembly, heterodimer of a catalytic subunit PRIM1 and a regulatory subunit PRIM2, also known as the DNA primase complex. Interacts via (C-terminus) with PRIM1. Component of the alpha DNA polymerase complex (also known as the alpha DNA polymerase-primase complex) consisting of four subunits: the catalytic subunit POLA1, the regulatory subunit POLA2, and the primase complex subunits PRIM1 and PRIM2 respectively. Within the complex, POLA1 directly interacts with PRIM2. The cofactor is [4Fe-4S] cluster.

In terms of biological role, regulatory subunit of the DNA primase complex and component of the DNA polymerase alpha complex (also known as the alpha DNA polymerase-primase complex) which play an essential role in the initiation of DNA synthesis. During the S phase of the cell cycle, the DNA polymerase alpha complex (composed of a catalytic subunit POLA1, an accessory subunit POLA2 and two primase subunits, the catalytic subunit PRIM1 and the regulatory subunit PRIM2) is recruited to DNA at the replicative forks via direct interactions with MCM10 and WDHD1. The primase subunit of the polymerase alpha complex initiates DNA synthesis by oligomerising short RNA primers on both leading and lagging strands. These primers are initially extended by the polymerase alpha catalytic subunit and subsequently transferred to polymerase delta and polymerase epsilon for processive synthesis on the lagging and leading strand, respectively. In the primase complex, both subunits are necessary for the initial di-nucleotide formation, but the extension of the primer depends only on the catalytic subunit. Binds RNA:DNA duplex and coordinates the catalytic activities of PRIM1 and POLA2 during primase-to-polymerase switch. The protein is DNA primase large subunit (Prim2) of Mus musculus (Mouse).